Here is a 1235-residue protein sequence, read N- to C-terminus: ATP-dependent helicase/nuclease subunit A (1235 aa).

The UvrD-like helicase ATP-binding domain maps to 3-471; sequence TKWTETQKSA…IKLSENFRSR (469 aa). 24 to 31 provides a ligand contact to ATP; that stretch reads AGAGTGKT. The UvrD-like helicase C-terminal domain occupies 509–808; the sequence is PFEGNCGGDV…RIMSIHKSKG (300 aa).

It belongs to the helicase family. AddA subfamily. In terms of assembly, heterodimer of AddA and AddB/RexB. It depends on Mg(2+) as a cofactor.

It catalyses the reaction Couples ATP hydrolysis with the unwinding of duplex DNA by translocating in the 3'-5' direction.. The enzyme catalyses ATP + H2O = ADP + phosphate + H(+). In terms of biological role, the heterodimer acts as both an ATP-dependent DNA helicase and an ATP-dependent, dual-direction single-stranded exonuclease. Recognizes the chi site generating a DNA molecule suitable for the initiation of homologous recombination. The AddA nuclease domain is required for chi fragment generation; this subunit has the helicase and 3' -&gt; 5' nuclease activities. The sequence is that of ATP-dependent helicase/nuclease subunit A from Clostridium kluyveri (strain ATCC 8527 / DSM 555 / NBRC 12016 / NCIMB 10680 / K1).